We begin with the raw amino-acid sequence, 183 residues long: Inner membrane-spanning protein YciB (183 aa).

The next 5 membrane-spanning stretches (helical) occupy residues 22 to 42 (IYAA…ITYL), 50 to 70 (MHLA…FFHD), 72 to 92 (AFIK…LIAS), 118 to 138 (VTWY…YIAF), and 148 to 168 (FKVF…VVYL).

Belongs to the YciB family.

It is found in the cell inner membrane. Its function is as follows. Plays a role in cell envelope biogenesis, maintenance of cell envelope integrity and membrane homeostasis. The polypeptide is Inner membrane-spanning protein YciB (Shewanella frigidimarina (strain NCIMB 400)).